The primary structure comprises 758 residues: MTIVTNLSFPRIGARRELKRALESHWRGETDATQLQHTARELRARHWQLQRDTGVDLPPSNDFSLYDHVLDTAFLFDAIPQRYRALADADPLAGYFAMARGRQADGIDLHALEMTKWFDTNYHYLVPELHRDQHFALRGNKPIAEFEEALALGITTRPVLLGPVSFLLLSKTVDGSNRLDLLERLLPVYTQLLRQLQASGAEWVQIDEPTLVLDLDAQTQQAFRKAYAALNQGPRPKLLLTSYFGPLGDNLELALQLPADGLHIDLVRGTEQLDAVLNTLPAGRVLSAGLVNGRNIWRTALDNALTLARYAQGRIGKDHVWLAPSCSLLHVPVDLEQEKNLDADVRNWLAFAKQKLSELRVLADALDNKPEAETALTQTRQALEARRQSPKVHRPEVAQRLAALTPDTTQRNTAYPQRSQAQQQTLNLPAYPTTTIGSFPQTLEVREARAQFKSGKLSESDYETFLKAETERCIRTQEEIGLDVLVHGEFERNDMVEYFGEQLDGFIFTKLGWVQSYGSRCVKPPIIYGDVVRPAPMTVTWSAYAQSLTDKPMKGMLTGPVTMLQWSFVRDDQERAQTCRQIALALRDEVQDLEKAGIKVIQIDEPAIREGLPLRRGEWADYLNWAVESFRIASSNVRDTTQIHTHMCYSEFNDIIEAVAALDADVISIETSRSRMELLDAFVKFRYPNAIGPGVYDIHSPRVPQEEEMVLLLKKARAVLPPEQLWVNPDCGLKTRGWKETRAALQTMVHAAQRLRAE.

5-methyltetrahydropteroyltri-L-glutamate contacts are provided by residues 16–19 and K116; that span reads RELK. L-homocysteine-binding positions include 436 to 438 and E489; that span reads IGS. L-methionine is bound by residues 436-438 and E489; that span reads IGS. Residues 520–521 and W566 contribute to the 5-methyltetrahydropteroyltri-L-glutamate site; that span reads RC. D604 contacts L-homocysteine. D604 lines the L-methionine pocket. E610 is a binding site for 5-methyltetrahydropteroyltri-L-glutamate. Zn(2+)-binding residues include H646, C648, and E670. Residue H699 is the Proton donor of the active site. C731 is a Zn(2+) binding site.

This sequence belongs to the vitamin-B12 independent methionine synthase family. Zn(2+) is required as a cofactor.

The catalysed reaction is 5-methyltetrahydropteroyltri-L-glutamate + L-homocysteine = tetrahydropteroyltri-L-glutamate + L-methionine. It participates in amino-acid biosynthesis; L-methionine biosynthesis via de novo pathway; L-methionine from L-homocysteine (MetE route): step 1/1. Functionally, catalyzes the transfer of a methyl group from 5-methyltetrahydrofolate to homocysteine resulting in methionine formation. The sequence is that of 5-methyltetrahydropteroyltriglutamate--homocysteine methyltransferase from Xylella fastidiosa (strain 9a5c).